A 413-amino-acid chain; its full sequence is S-adenosylmethionine synthase (413 aa).

Residue H15 coordinates ATP. Residue D17 participates in Mg(2+) binding. E43 contacts K(+). Residues E56 and Q100 each contribute to the L-methionine site. Residues 100–110 (QSPDISQGVNE) form a flexible loop region. ATP-binding positions include 171–173 (DGK), 248–249 (KF), D257, 263–264 (RK), A280, and K284. Residue D257 participates in L-methionine binding. K288 is a binding site for L-methionine.

The protein belongs to the AdoMet synthase family. In terms of assembly, homotetramer; dimer of dimers. Mg(2+) serves as cofactor. The cofactor is K(+).

It localises to the cytoplasm. The enzyme catalyses L-methionine + ATP + H2O = S-adenosyl-L-methionine + phosphate + diphosphate. The protein operates within amino-acid biosynthesis; S-adenosyl-L-methionine biosynthesis; S-adenosyl-L-methionine from L-methionine: step 1/1. Catalyzes the formation of S-adenosylmethionine (AdoMet) from methionine and ATP. The overall synthetic reaction is composed of two sequential steps, AdoMet formation and the subsequent tripolyphosphate hydrolysis which occurs prior to release of AdoMet from the enzyme. The chain is S-adenosylmethionine synthase from Prochlorococcus marinus (strain MIT 9215).